Reading from the N-terminus, the 337-residue chain is Molybdate import system permease protein MolB (337 aa).

Over 1–5 (MQPDS) the chain is Cytoplasmic. The chain crosses the membrane as a helical span at residues 6-25 (YPKILFGLTLLLVITAVISL). The Periplasmic portion of the chain corresponds to 26 to 51 (GIGRYSLSVPQIGQILWAKATALEID). Residues 52 to 87 (PVQQQVIFQVRLPRILTALCVGAGLALSGVVLQGIF) traverse the membrane as a helical segment. Residues 88–98 (RNPLVNPHIIG) lie on the Cytoplasmic side of the membrane. The helical transmembrane segment at 99-113 (VTSGSAFGGTLAIFF) threads the bilayer. Over 114-116 (GFS) the chain is Periplasmic. The chain crosses the membrane as a helical span at residues 117–140 (LYGLFTSTILFGFGTLALVFLFSF). At 141–146 (KFNQRS) the chain is on the cytoplasmic side. The helical transmembrane segment at 147–171 (LLMLILIGMILSGLFSALVSLLQYI) threads the bilayer. Residues 172–193 (SDTEEKLPSIVFWLMGSFATSN) lie on the Periplasmic side of the membrane. A helical transmembrane segment spans residues 194-214 (WEKLLFFFVPFLLCSSILLSL). At 215-234 (SWRLNLLSLDEKEAKALGVK) the chain is on the cytoplasmic side. A helical membrane pass occupies residues 235–257 (MAPLRWLVIFLSGSLVACQVAIS). Over 258 to 264 (GSIGWVG) the chain is Periplasmic. A helical membrane pass occupies residues 265–275 (LIIPHLSRMLV). The Cytoplasmic portion of the chain corresponds to 276 to 278 (GAN). A helical transmembrane segment spans residues 279–304 (HQSLLPCTMLVGATYMLLVDNVARSL). Over 305–310 (SDAEIP) the chain is Periplasmic. The helical transmembrane segment at 311-329 (ISILTALIGAPLFGVLVYK) threads the bilayer. Over 330 to 337 (LKRGGMNE) the chain is Cytoplasmic.

This sequence belongs to the binding-protein-dependent transport system permease family. FecCD subfamily. The complex is composed of two ATP-binding proteins (MolC), two transmembrane proteins (MolB) and a solute-binding protein (MolA).

The protein localises to the cell inner membrane. Its activity is regulated as follows. The MolBCA complex shows a decrease in affinity in the presence of increasing concentrations of substrate and nucleotide. In terms of biological role, part of the ABC transporter complex MolBCA involved in molybdate import. Responsible for the translocation of the substrate across the membrane. Functions as a low-affinity molybdate transporter. This chain is Molybdate import system permease protein MolB, found in Haemophilus influenzae (strain ATCC 51907 / DSM 11121 / KW20 / Rd).